Consider the following 53-residue polypeptide: Ribulose bisphosphate carboxylase large chain (53 aa).

The propeptide occupies Met1–Ser2. Residue Pro3 is modified to N-acetylproline. Residue Lys14 is modified to N6,N6,N6-trimethyllysine.

It belongs to the RuBisCO large chain family. Type I subfamily. In terms of assembly, heterohexadecamer of 8 large chains and 8 small chains.

It localises to the plastid. The protein resides in the chloroplast. It catalyses the reaction 2 (2R)-3-phosphoglycerate + 2 H(+) = D-ribulose 1,5-bisphosphate + CO2 + H2O. The catalysed reaction is D-ribulose 1,5-bisphosphate + O2 = 2-phosphoglycolate + (2R)-3-phosphoglycerate + 2 H(+). Functionally, ruBisCO catalyzes two reactions: the carboxylation of D-ribulose 1,5-bisphosphate, the primary event in carbon dioxide fixation, as well as the oxidative fragmentation of the pentose substrate in the photorespiration process. Both reactions occur simultaneously and in competition at the same active site. The protein is Ribulose bisphosphate carboxylase large chain (rbcL) of Malus domestica (Apple).